Here is a 516-residue protein sequence, read N- to C-terminus: Oxysterol-binding protein-like protein 1 (516 aa).

Disordered stretches follow at residues 168–240 (PLGK…SQKS) and 459–501 (KQEI…EEGK). Residues 178–187 (SRTTSSQSVA) show a composition bias toward polar residues. The residue at position 182 (serine 182) is a Phosphoserine. Over residues 197-206 (TSKKKSSKKN) the composition is skewed to basic residues. The span at 218–238 (DRSSTAPSTAESNNEHLSSSQ) shows a compositional bias: polar residues.

The protein belongs to the OSBP family.

It is found in the endoplasmic reticulum. The protein is Oxysterol-binding protein-like protein 1 (obp1) of Schizosaccharomyces pombe (strain 972 / ATCC 24843) (Fission yeast).